We begin with the raw amino-acid sequence, 102 residues long: ATP-dependent Clp protease adapter protein ClpS (102 aa).

It belongs to the ClpS family. In terms of assembly, binds to the N-terminal domain of the chaperone ClpA.

In terms of biological role, involved in the modulation of the specificity of the ClpAP-mediated ATP-dependent protein degradation. The protein is ATP-dependent Clp protease adapter protein ClpS of Shewanella baltica (strain OS155 / ATCC BAA-1091).